Reading from the N-terminus, the 54-residue chain is Large ribosomal subunit protein bL33B (54 aa).

The protein belongs to the bacterial ribosomal protein bL33 family.

The protein is Large ribosomal subunit protein bL33B of Mycolicibacterium vanbaalenii (strain DSM 7251 / JCM 13017 / BCRC 16820 / KCTC 9966 / NRRL B-24157 / PYR-1) (Mycobacterium vanbaalenii).